A 451-amino-acid polypeptide reads, in one-letter code: SKLLDNLRDAVRKFLTGSSSYDKAVEDFIKELQKSLISADVNVKLVFSLTNKIKERLKNEKPPTYIERREWFIKIVYDELSNLFGGDKEPKVIPDKIPYVIMLVGVQGTGKTTTAGKLAYFYKKKGFKVGLVGADVYRPAALEQLQQLGQQIGVPVYGEPGEKDAVGIAKRGVEKFLSEKMEIIIVDTAGRHGYGEEAALLEEMKNIYEAIKPDEVTLVIDASIGQKAYDLASKFNQASKIGTIIITKMDGTAKGGGALSAVAATGATIKFIGTGEKIDELEVFNPRRFVARILGMGDIETILEKIKEVENYDKMQKKMEEVISGKGKLTLRDVYNQLIALRKMGPLSKLFQLLPGIGMLGQIPEDQLKVGEEKMRKWLAIMNSMTYEELDNPSIIDKSRMRRIALGSGTEIEDVKELIEHYNLMQRTIKMLKRRKKDVEKLLGQFGGEST.

GTP contacts are provided by residues 105-112 (GVQGTGKT), 187-191 (DTAGR), and 247-250 (TKMD).

The protein belongs to the GTP-binding SRP family. SRP54 subfamily. In terms of assembly, part of the signal recognition particle protein translocation system, which is composed of SRP and FtsY. Archaeal SRP consists of a 7S RNA molecule of 300 nucleotides and two protein subunits: SRP54 and SRP19.

It is found in the cytoplasm. It carries out the reaction GTP + H2O = GDP + phosphate + H(+). In terms of biological role, involved in targeting and insertion of nascent membrane proteins into the cytoplasmic membrane. Binds to the hydrophobic signal sequence of the ribosome-nascent chain (RNC) as it emerges from the ribosomes. The SRP-RNC complex is then targeted to the cytoplasmic membrane where it interacts with the SRP receptor FtsY. This Acidianus ambivalens (Desulfurolobus ambivalens) protein is Signal recognition particle 54 kDa protein.